Reading from the N-terminus, the 353-residue chain is MNGTEGPYFYIPMVNTTGIVRSPYEYPQYYLVNPAAYAALGAYMFLLILIGFPVNFLTLYVTIEHKKLRTPLNYILLNLAVADLFMVFGGFTTTMYTSMHGYFVLGRLGCNLEGFFATLGGEIALWSLVVLAVERWMVVCKPISNFRFGEDHAIMGLAFTWVMAAACAVPPLVGWSRYIPEGMQCSCGIDYYTRAEGFNNESFVIYMFVCHFLIPLVVVFFCYGRLLCAVKEAAAAQQESETTQRAEREVSRMVVIMVVAFLVCWCPYAGVAWYIFTHQGSEFGPLFMTFPAFFAKSSSIYNPMIYICMNKQFRQCMITTLCCGKNPFEEEEGASTTSKTEASSVSSSSVSPA.

Residues 1–36 lie on the Extracellular side of the membrane; the sequence is MNGTEGPYFYIPMVNTTGIVRSPYEYPQYYLVNPAA. N-linked (GlcNAc...) asparagine glycans are attached at residues N2 and N15. The chain crosses the membrane as a helical span at residues 37 to 61; the sequence is YAALGAYMFLLILIGFPVNFLTLYV. Over 62 to 73 the chain is Cytoplasmic; the sequence is TIEHKKLRTPLN. The chain crosses the membrane as a helical span at residues 74–96; that stretch reads YILLNLAVADLFMVFGGFTTTMY. The Extracellular portion of the chain corresponds to 97 to 110; the sequence is TSMHGYFVLGRLGC. C110 and C187 are disulfide-bonded. Residues 111–133 form a helical membrane-spanning segment; the sequence is NLEGFFATLGGEIALWSLVVLAV. The 'Ionic lock' involved in activated form stabilization motif lies at 134 to 136; it reads ERW. Residues 134–152 lie on the Cytoplasmic side of the membrane; it reads ERWMVVCKPISNFRFGEDH. Residues 153–173 traverse the membrane as a helical segment; the sequence is AIMGLAFTWVMAAACAVPPLV. At 174-202 the chain is on the extracellular side; it reads GWSRYIPEGMQCSCGIDYYTRAEGFNNES. A glycan (N-linked (GlcNAc...) asparagine) is linked at N200. A helical membrane pass occupies residues 203 to 224; sequence FVIYMFVCHFLIPLVVVFFCYG. Over 225–252 the chain is Cytoplasmic; that stretch reads RLLCAVKEAAAAQQESETTQRAEREVSR. Residues 253 to 274 form a helical membrane-spanning segment; the sequence is MVVIMVVAFLVCWCPYAGVAWY. The Extracellular segment spans residues 275–286; it reads IFTHQGSEFGPL. The chain crosses the membrane as a helical span at residues 287–308; it reads FMTFPAFFAKSSSIYNPMIYIC. K296 bears the N6-(retinylidene)lysine mark. Topologically, residues 309-353 are cytoplasmic; it reads MNKQFRQCMITTLCCGKNPFEEEEGASTTSKTEASSVSSSSVSPA. 2 S-palmitoyl cysteine lipidation sites follow: C322 and C323. Residues 329–353 are disordered; that stretch reads EEEEGASTTSKTEASSVSSSSVSPA. Positions 334-353 are enriched in low complexity; sequence ASTTSKTEASSVSSSSVSPA.

It belongs to the G-protein coupled receptor 1 family. Opsin subfamily. Post-translationally, phosphorylated on some or all of the serine and threonine residues present in the C-terminal region. Contains one covalently linked retinal chromophore.

The protein resides in the membrane. The protein localises to the cell projection. It is found in the cilium. Its subcellular location is the photoreceptor outer segment. Functionally, photoreceptor required for image-forming vision at low light intensity. While most salt water fish species use retinal as chromophore, most freshwater fish use 3-dehydroretinal, or a mixture of retinal and 3-dehydroretinal. Light-induced isomerization of 11-cis to all-trans retinal triggers a conformational change that activates signaling via G-proteins. Subsequent receptor phosphorylation mediates displacement of the bound G-protein alpha subunit by arrestin and terminates signaling. The chain is Rhodopsin (rho) from Chelon auratus (Golden grey mullet).